The chain runs to 539 residues: Eukaryotic translation initiation factor 3 subunit L (539 aa).

A PCI domain is found at 306 to 514 (TFSDILLYIQ…IHIADTKVSH (209 aa)).

The protein belongs to the eIF-3 subunit L family. As to quaternary structure, component of the eukaryotic translation initiation factor 3 (eIF-3) complex. The eIF-3 complex interacts with pix.

Its subcellular location is the cytoplasm. Functionally, component of the eukaryotic translation initiation factor 3 (eIF-3) complex, which is involved in protein synthesis of a specialized repertoire of mRNAs and, together with other initiation factors, stimulates binding of mRNA and methionyl-tRNAi to the 40S ribosome. The eIF-3 complex specifically targets and initiates translation of a subset of mRNAs involved in cell proliferation. This is Eukaryotic translation initiation factor 3 subunit L from Drosophila sechellia (Fruit fly).